The following is a 274-amino-acid chain: Kit ligand (274 aa).

Residues 1-25 (MKKTQTWIITCIYLQLLLFNPLVRT) form the signal peptide. Pyrrolidone carboxylic acid is present on glutamine 26. At 26-215 (QGICRNRVTD…SDSIEDSSLQ (190 aa)) the chain is on the extracellular side. Disulfide bonds link cysteine 29-cysteine 114 and cysteine 68-cysteine 164. N-linked (GlcNAc...) asparagine glycans are attached at residues asparagine 90, asparagine 97, asparagine 145, and asparagine 196. The helical transmembrane segment at 216-238 (WAAVALPAFFSLVIGFAFGALYW) threads the bilayer. The Cytoplasmic portion of the chain corresponds to 239–274 (KKKQPNLTRTVENIQINEEDNEISMLQEKEREFQEV).

Belongs to the SCF family. Homodimer, non-covalently linked. Heterotetramer with KIT, binding two KIT molecules; thereby mediates KIT dimerization and subsequent activation by autophosphorylation. A soluble form is produced by proteolytic processing of the extracellular domain.

The protein localises to the cytoplasm. Its subcellular location is the cytoskeleton. It localises to the cell membrane. It is found in the cell projection. The protein resides in the lamellipodium. The protein localises to the filopodium. Its subcellular location is the secreted. In terms of biological role, ligand for the receptor-type protein-tyrosine kinase KIT. Plays an essential role in the regulation of cell survival and proliferation, hematopoiesis, stem cell maintenance, gametogenesis, mast cell development, migration and function, and in melanogenesis. KITLG/SCF binding can activate several signaling pathways. Promotes phosphorylation of PIK3R1, the regulatory subunit of phosphatidylinositol 3-kinase, and subsequent activation of the kinase AKT1. KITLG/SCF and KIT also transmit signals via GRB2 and activation of RAS, RAF1 and the MAP kinases MAPK1/ERK2 and/or MAPK3/ERK1. KITLG/SCF and KIT promote activation of STAT family members STAT1, STAT3 and STAT5. KITLG/SCF and KIT promote activation of PLCG1, leading to the production of the cellular signaling molecules diacylglycerol and inositol 1,4,5-trisphosphate. KITLG/SCF acts synergistically with other cytokines, probably interleukins. The sequence is that of Kit ligand (KITLG) from Sus scrofa (Pig).